Here is a 361-residue protein sequence, read N- to C-terminus: tRNA-specific 2-thiouridylase MnmA (361 aa).

ATP is bound by residues 11-18 (GMSGGVDS) and Met-37. Positions 97-99 (NPD) are interaction with target base in tRNA. Cys-102 functions as the Nucleophile in the catalytic mechanism. Cys-102 and Cys-199 are oxidised to a cystine. Gly-126 contacts ATP. Residues 149 to 151 (KDQ) form an interaction with tRNA region. The active-site Cysteine persulfide intermediate is the Cys-199. The tract at residues 311 to 312 (RY) is interaction with tRNA.

Belongs to the MnmA/TRMU family.

The protein localises to the cytoplasm. The catalysed reaction is S-sulfanyl-L-cysteinyl-[protein] + uridine(34) in tRNA + AH2 + ATP = 2-thiouridine(34) in tRNA + L-cysteinyl-[protein] + A + AMP + diphosphate + H(+). Its function is as follows. Catalyzes the 2-thiolation of uridine at the wobble position (U34) of tRNA, leading to the formation of s(2)U34. The chain is tRNA-specific 2-thiouridylase MnmA from Cupriavidus necator (strain ATCC 17699 / DSM 428 / KCTC 22496 / NCIMB 10442 / H16 / Stanier 337) (Ralstonia eutropha).